A 374-amino-acid polypeptide reads, in one-letter code: S-adenosylmethionine:tRNA ribosyltransferase-isomerase (374 aa).

Belongs to the QueA family. As to quaternary structure, monomer.

The protein resides in the cytoplasm. It carries out the reaction 7-aminomethyl-7-carbaguanosine(34) in tRNA + S-adenosyl-L-methionine = epoxyqueuosine(34) in tRNA + adenine + L-methionine + 2 H(+). The protein operates within tRNA modification; tRNA-queuosine biosynthesis. Functionally, transfers and isomerizes the ribose moiety from AdoMet to the 7-aminomethyl group of 7-deazaguanine (preQ1-tRNA) to give epoxyqueuosine (oQ-tRNA). This chain is S-adenosylmethionine:tRNA ribosyltransferase-isomerase, found in Prochlorococcus marinus (strain AS9601).